We begin with the raw amino-acid sequence, 103 residues long: Small ribosomal subunit protein uS10 (103 aa).

It belongs to the universal ribosomal protein uS10 family. As to quaternary structure, part of the 30S ribosomal subunit.

Functionally, involved in the binding of tRNA to the ribosomes. The chain is Small ribosomal subunit protein uS10 from Natranaerobius thermophilus (strain ATCC BAA-1301 / DSM 18059 / JW/NM-WN-LF).